Consider the following 171-residue polypeptide: MSPKDLTPFLTTLWLLLGHSRVPRVRAEECCEFINVNHPPERCYDFKMCNRFTVALRCPDGEVCYSPEKTAEIRGIVTTMTHSLTRQVVHNKLTSCNYNPLYLEADGRIRCGKVNDKAQYLLGAAGSVPYRWINLEYDKITRIVGLDQYLESVKKHKRLDVCRAKMGYMLQ.

It belongs to the HHV-5 UL128 protein family. As to quaternary structure, forms the envelope pentamer complex (PC) composed of gH, gL, UL128, UL130, and UL131A. The pentamer interacts with host NRP2.

The protein localises to the virion membrane. Its function is as follows. Plays a role in viral entry into host cells. Forms a pentameric complex at the surface of the viral envelope together with gH, gL, UL130 and UL131. This complex is required for entry in epithelial, endothelial and myeloid host cells. Mechanistically, engages host receptor(s) including neurophilin 2/NRP2 to mediate infection. Additionally, monomeric UL128 may interfere with certain inflammatory cytokines to increase infection and dissemination by blocking monocytes migration. This is an uncharacterized protein from Human cytomegalovirus (strain AD169) (HHV-5).